Consider the following 164-residue polypeptide: Sperm axonemal maintenance protein CFAP97D1 (164 aa).

The stretch at 61 to 88 (LSKIQGEQKRIDKIEYENRQLCQKIANA) forms a coiled coil.

Belongs to the CFAP97 family. As to expression, expressed exclusively in testis.

Required for male fertility through its role in axonemal doublet stabilization which is essential for sperm motility and fertilization. This Mus musculus (Mouse) protein is Sperm axonemal maintenance protein CFAP97D1 (Cfap97d1).